Consider the following 429-residue polypeptide: Adenylosuccinate synthetase (429 aa).

Residues 12–18 and 40–42 contribute to the GTP site; these read GDEGKGK and GHT. Aspartate 13 acts as the Proton acceptor in catalysis. Aspartate 13 and glycine 40 together coordinate Mg(2+). Residues 13–16, 38–41, threonine 129, arginine 143, glutamine 223, threonine 238, and arginine 302 each bind IMP; these read DEGK and NAGH. Residue histidine 41 is the Proton donor of the active site. A substrate-binding site is contributed by 298 to 304; the sequence is TVTGRKR. GTP is bound by residues arginine 304, 330 to 332, and 412 to 414; these read KLD and STS.

Belongs to the adenylosuccinate synthetase family. In terms of assembly, homodimer. Mg(2+) is required as a cofactor.

It localises to the cytoplasm. It carries out the reaction IMP + L-aspartate + GTP = N(6)-(1,2-dicarboxyethyl)-AMP + GDP + phosphate + 2 H(+). Its pathway is purine metabolism; AMP biosynthesis via de novo pathway; AMP from IMP: step 1/2. Functionally, plays an important role in the de novo pathway of purine nucleotide biosynthesis. Catalyzes the first committed step in the biosynthesis of AMP from IMP. The sequence is that of Adenylosuccinate synthetase from Sphingopyxis alaskensis (strain DSM 13593 / LMG 18877 / RB2256) (Sphingomonas alaskensis).